We begin with the raw amino-acid sequence, 182 residues long: Protein LIGHT-DEPENDENT SHORT HYPOCOTYLS 5 (182 aa).

Residues 1–16 show a composition bias toward low complexity; that stretch reads MEGETAAKAAASSSSS. Disordered stretches follow at residues 1–22 and 138–168; these read MEGETAAKAAASSSSSPSRYES and ARGIPYDKKKRKRPHTDTATPIAGDGDDAEG. One can recognise an ALOG domain in the interval 19–147; sequence RYESQKRRDW…ARGIPYDKKK (129 aa). The short motif at 145–149 is the Nuclear localization signal element; sequence KKKRK.

This sequence belongs to the plant homeotic and developmental regulators ALOG protein family.

Its subcellular location is the nucleus. Its function is as follows. Probable transcription regulator that acts as a developmental regulator by promoting cell growth in response to light. This is Protein LIGHT-DEPENDENT SHORT HYPOCOTYLS 5 (LSH5) from Arabidopsis thaliana (Mouse-ear cress).